Reading from the N-terminus, the 162-residue chain is MGLETEKADVQLFMDDDSYSHHSGLEYADPEKFADSDQDRDPHRLNSHLKLGFEDVIAEPVTTHSFDKVWICSHALFEISKYVMYKFLTVFLAIPLAFIAGILFATLSCLHIWILMPFVKTCLMVLPSVQTIWKSVTDVIIAPLCTSVGRCFSSVSLQLSQD.

At 1–86 the chain is on the cytoplasmic side; it reads MGLETEKADV…FEISKYVMYK (86 aa). Residue Tyr-19 is modified to Phosphotyrosine; by SRC. Ser-20 and Ser-23 each carry phosphoserine. Tyr-27 is subject to Phosphotyrosine; by SRC. At Ser-36 the chain carries Phosphoserine. An intramembrane region (helical) is located at residues 87–107; the sequence is FLTVFLAIPLAFIAGILFATL. At 108 to 162 the chain is on the cytoplasmic side; that stretch reads SCLHIWILMPFVKTCLMVLPSVQTIWKSVTDVIIAPLCTSVGRCFSSVSLQLSQD.

The protein belongs to the caveolin family. As to quaternary structure, monomer or homodimer. Interacts with CAV1; the interaction forms a stable heterooligomeric complex that is required for targeting to lipid rafts and for caveolae formation. Tyrosine phosphorylated forms do not form heterooligomers with the Tyr-19-phosphorylated form existing as a monomer or dimer, and the Tyr-27-form as a monomer only. Interacts (tyrosine phosphorylated form) with the SH2 domain-containing proteins, RASA1, NCK1 and SRC. Interacts (tyrosine phosphorylated form) with INSR, the interaction (Tyr-27-phosphorylated form) is increased on insulin stimulation. Interacts (Tyr-19 phosphorylated form) with MAPK1 (phosphorylated form); the interaction, promoted by insulin, leads to nuclear location and MAPK1 activation. Interacts with STAT3; the interaction is increased on insulin-induced tyrosine phosphorylation leading to STAT activation. Phosphorylated on serine and tyrosine residues. CAV1 promotes phosphorylation on Ser-23 which then targets the complex to the plasma membrane, lipid rafts and caveolae. Phosphorylation on Ser-36 appears to modulate mitosis in endothelial cells. Phosphorylation on both Tyr-19 and Tyr-27 is required for insulin-induced 'Ser-727' phosphorylation of STAT3 and its activation. Phosphorylation on Tyr-19 is required for insulin-induced phosphorylation of MAPK1 and DNA binding of STAT3. Tyrosine phosphorylation is induced by both EGF and insulin (By. similarity).

It is found in the nucleus. The protein resides in the cytoplasm. It localises to the golgi apparatus membrane. The protein localises to the cell membrane. Its subcellular location is the membrane. It is found in the caveola. Functionally, may act as a scaffolding protein within caveolar membranes. Interacts directly with G-protein alpha subunits and can functionally regulate their activity. Acts as an accessory protein in conjunction with CAV1 in targeting to lipid rafts and driving caveolae formation. The Ser-36 phosphorylated form has a role in modulating mitosis in endothelial cells. Positive regulator of cellular mitogenesis of the MAPK signaling pathway. Required for the insulin-stimulated nuclear translocation and activation of MAPK1 and STAT3, and the subsequent regulation of cell cycle progression. The chain is Caveolin-2 (CAV2) from Pan troglodytes (Chimpanzee).